Consider the following 88-residue polypeptide: Translation initiation factor IF-1 2 (88 aa).

The 72-residue stretch at 1–72 (MAKEELIELQ…TKGRINFRHK (72 aa)) folds into the S1-like domain.

This sequence belongs to the IF-1 family. Component of the 30S ribosomal translation pre-initiation complex which assembles on the 30S ribosome in the order IF-2 and IF-3, IF-1 and N-formylmethionyl-tRNA(fMet); mRNA recruitment can occur at any time during PIC assembly.

The protein resides in the cytoplasm. Its function is as follows. One of the essential components for the initiation of protein synthesis. Stabilizes the binding of IF-2 and IF-3 on the 30S subunit to which N-formylmethionyl-tRNA(fMet) subsequently binds. Helps modulate mRNA selection, yielding the 30S pre-initiation complex (PIC). Upon addition of the 50S ribosomal subunit IF-1, IF-2 and IF-3 are released leaving the mature 70S translation initiation complex. This is Translation initiation factor IF-1 2 from Bordetella avium (strain 197N).